The primary structure comprises 546 residues: Protein phosphatase 1G (546 aa).

A lipid anchor (N-myristoyl glycine) is attached at Gly2. An Omega-N-methylarginine modification is found at Arg22. The PPM-type phosphatase domain maps to Pro26–Phe505. Mn(2+) is bound by residues Asp60 and Gly61. 2 disordered regions span residues Gln116–Asn139 and Gly161–Gly328. Thr122 bears the Phosphothreonine mark. The span at Glu123–Asn139 shows a compositional bias: acidic residues. A Phosphoserine modification is found at Ser183. The span at Asp259–Met312 shows a compositional bias: acidic residues. At Lys383 the chain carries N6-acetyllysine. The Mn(2+) site is built by Asp441 and Asp496. Residues Glu512–Asp546 form a disordered region. Phosphoserine is present on Ser527.

The protein belongs to the PP2C family. Interacts with NOL3; may dephosphorylate NOL3. The cofactor is Mg(2+). Mn(2+) is required as a cofactor. As to expression, widely expressed. Most abundant in testis, skeletal muscle, and heart.

It is found in the cytoplasm. Its subcellular location is the membrane. It catalyses the reaction O-phospho-L-seryl-[protein] + H2O = L-seryl-[protein] + phosphate. The enzyme catalyses O-phospho-L-threonyl-[protein] + H2O = L-threonyl-[protein] + phosphate. This chain is Protein phosphatase 1G (PPM1G), found in Homo sapiens (Human).